The chain runs to 311 residues: Methionyl-tRNA formyltransferase (311 aa).

Residue 112-115 coordinates (6S)-5,6,7,8-tetrahydrofolate; the sequence is SLLP.

The protein belongs to the Fmt family.

The catalysed reaction is L-methionyl-tRNA(fMet) + (6R)-10-formyltetrahydrofolate = N-formyl-L-methionyl-tRNA(fMet) + (6S)-5,6,7,8-tetrahydrofolate + H(+). Attaches a formyl group to the free amino group of methionyl-tRNA(fMet). The formyl group appears to play a dual role in the initiator identity of N-formylmethionyl-tRNA by promoting its recognition by IF2 and preventing the misappropriation of this tRNA by the elongation apparatus. This chain is Methionyl-tRNA formyltransferase, found in Bradyrhizobium sp. (strain ORS 278).